Reading from the N-terminus, the 507-residue chain is ATP synthase subunit alpha, chloroplastic (507 aa).

An ATP-binding site is contributed by 170 to 177 (GDRQTGKA).

The protein belongs to the ATPase alpha/beta chains family. As to quaternary structure, F-type ATPases have 2 components, CF(1) - the catalytic core - and CF(0) - the membrane proton channel. CF(1) has five subunits: alpha(3), beta(3), gamma(1), delta(1), epsilon(1). CF(0) has four main subunits: a, b, b' and c.

It is found in the plastid. The protein localises to the chloroplast thylakoid membrane. It catalyses the reaction ATP + H2O + 4 H(+)(in) = ADP + phosphate + 5 H(+)(out). Produces ATP from ADP in the presence of a proton gradient across the membrane. The alpha chain is a regulatory subunit. The chain is ATP synthase subunit alpha, chloroplastic from Calycanthus floridus var. glaucus (Eastern sweetshrub).